Consider the following 370-residue polypeptide: Flagellar P-ring protein (370 aa).

Positions M1 to A24 are cleaved as a signal peptide.

Belongs to the FlgI family. In terms of assembly, the basal body constitutes a major portion of the flagellar organelle and consists of four rings (L,P,S, and M) mounted on a central rod.

The protein localises to the periplasm. Its subcellular location is the bacterial flagellum basal body. Assembles around the rod to form the L-ring and probably protects the motor/basal body from shearing forces during rotation. This is Flagellar P-ring protein from Nitrosomonas europaea (strain ATCC 19718 / CIP 103999 / KCTC 2705 / NBRC 14298).